A 158-amino-acid polypeptide reads, in one-letter code: Ecotin-like protein 2 (158 aa).

The protein belongs to the protease inhibitor I11 (ecotin) family.

This is Ecotin-like protein 2 from Leishmania major.